A 209-amino-acid chain; its full sequence is uncharacterized protein (209 aa).

This is an uncharacterized protein from Acanthamoeba polyphaga mimivirus (APMV).